The following is a 256-amino-acid chain: 1-(5-phosphoribosyl)-5-[(5-phosphoribosylamino)methylideneamino] imidazole-4-carboxamide isomerase (256 aa).

The Proton acceptor role is filled by D8. D130 acts as the Proton donor in catalysis.

It belongs to the HisA/HisF family.

The protein resides in the cytoplasm. It catalyses the reaction 1-(5-phospho-beta-D-ribosyl)-5-[(5-phospho-beta-D-ribosylamino)methylideneamino]imidazole-4-carboxamide = 5-[(5-phospho-1-deoxy-D-ribulos-1-ylimino)methylamino]-1-(5-phospho-beta-D-ribosyl)imidazole-4-carboxamide. It participates in amino-acid biosynthesis; L-histidine biosynthesis; L-histidine from 5-phospho-alpha-D-ribose 1-diphosphate: step 4/9. The chain is 1-(5-phosphoribosyl)-5-[(5-phosphoribosylamino)methylideneamino] imidazole-4-carboxamide isomerase from Chlorobium phaeobacteroides (strain DSM 266 / SMG 266 / 2430).